The primary structure comprises 471 residues: Probable lysophospholipase BODYGUARD 2 (471 aa).

Positions 1–45 (MGIARWLNRTVGFFVFALLDIADFLLCYTYKTLDYFLESERKPCY) are cleaved as a signal peptide. C46 carries the N-palmitoyl cysteine lipid modification. Residues 193–296 (VVFIHGFVSS…AIKSLTLLAP (104 aa)) form the AB hydrolase-1 domain. H197 is an active-site residue. The active-site Nucleophile is the S271. Catalysis depends on charge relay system residues D418 and H446.

It is found in the cell membrane. The protein resides in the secreted. The protein localises to the cell wall. Involved in cuticle development and morphogenesis. This Arabidopsis thaliana (Mouse-ear cress) protein is Probable lysophospholipase BODYGUARD 2.